The following is a 1066-amino-acid chain: Beta-galactosidase (1066 aa).

Asn-110 and Asp-209 together coordinate substrate. Residue Asp-209 coordinates Na(+). Residues Glu-432, His-434, and Glu-477 each contribute to the Mg(2+) site. Residues Glu-477 and 553–556 (EYAH) contribute to the substrate site. Glu-477 (proton donor) is an active-site residue. Glu-553 (nucleophile) is an active-site residue. Asn-613 lines the Mg(2+) pocket. The Na(+) site is built by Phe-617 and Asn-620. Substrate contacts are provided by Asn-620 and Trp-1041.

Belongs to the glycosyl hydrolase 2 family. In terms of assembly, homotetramer. The cofactor is Mg(2+). It depends on Na(+) as a cofactor.

It catalyses the reaction Hydrolysis of terminal non-reducing beta-D-galactose residues in beta-D-galactosides.. The chain is Beta-galactosidase from Yersinia pseudotuberculosis serotype O:1b (strain IP 31758).